Consider the following 379-residue polypeptide: Cytochrome b (379 aa).

Helical transmembrane passes span 33-53 (FGSLLGLCLISQILTGLFLAM), 77-98 (WLIRNLHANGASFFFICLYLHI), 113-133 (WNIGVVLFLLVMMTAFVGYVL), and 178-198 (FFAFHFLFPFVVAGATMIHLL). Heme b is bound by residues histidine 83 and histidine 97. The heme b site is built by histidine 182 and histidine 196. Histidine 201 is a binding site for a ubiquinone. Helical transmembrane passes span 226–246 (YKDLLGFIIMLTALTMLALFY), 288–308 (LGGVLALLSSILVLMVVPILH), 320–340 (ASQLLFWILVADMLVLTWIGG), and 347–367 (YIIIGQVASVLYFSLFLVLNP).

The protein belongs to the cytochrome b family. As to quaternary structure, the cytochrome bc1 complex contains 3 respiratory subunits (MT-CYB, CYC1 and UQCRFS1), 2 core proteins (UQCRC1 and UQCRC2) and probably 6 low-molecular weight proteins. Heme b is required as a cofactor.

It localises to the mitochondrion inner membrane. Functionally, component of the ubiquinol-cytochrome c reductase complex (complex III or cytochrome b-c1 complex) that is part of the mitochondrial respiratory chain. The b-c1 complex mediates electron transfer from ubiquinol to cytochrome c. Contributes to the generation of a proton gradient across the mitochondrial membrane that is then used for ATP synthesis. The chain is Cytochrome b (mt-cyb) from Anguilla dieffenbachii (New Zealand longfin eel).